The sequence spans 341 residues: Cobalt-precorrin-5B C(1)-methyltransferase (341 aa).

Belongs to the CbiD family.

The enzyme catalyses Co-precorrin-5B + S-adenosyl-L-methionine = Co-precorrin-6A + S-adenosyl-L-homocysteine. It participates in cofactor biosynthesis; adenosylcobalamin biosynthesis; cob(II)yrinate a,c-diamide from sirohydrochlorin (anaerobic route): step 6/10. Functionally, catalyzes the methylation of C-1 in cobalt-precorrin-5B to form cobalt-precorrin-6A. This chain is Cobalt-precorrin-5B C(1)-methyltransferase, found in Picrophilus torridus (strain ATCC 700027 / DSM 9790 / JCM 10055 / NBRC 100828 / KAW 2/3).